The primary structure comprises 341 residues: Ubiquinone biosynthesis protein COQ4, mitochondrial (341 aa).

Residues Met1–Gln16 constitute a mitochondrion transit peptide. Residues His220, Asp221, His224, and Glu236 each coordinate Zn(2+).

It belongs to the COQ4 family. Component of a multi-subunit COQ enzyme complex, composed of at least COQ3, COQ4, COQ5, COQ6, COQ7 and COQ9. Requires Zn(2+) as cofactor.

Its subcellular location is the mitochondrion inner membrane. The catalysed reaction is a 4-hydroxy-3-methoxy-5-(all-trans-polyprenyl)benzoate + H(+) = a 2-methoxy-6-(all-trans-polyprenyl)phenol + CO2. It functions in the pathway cofactor biosynthesis; ubiquinone biosynthesis. Its function is as follows. Lyase that catalyzes the C1-decarboxylation of 4-hydroxy-3-methoxy-5-(all-trans-polyprenyl)benzoic acid into 2-methoxy-6-(all-trans-polyprenyl)phenol during ubiquinone biosynthesis. This is Ubiquinone biosynthesis protein COQ4, mitochondrial from Vanderwaltozyma polyspora (strain ATCC 22028 / DSM 70294 / BCRC 21397 / CBS 2163 / NBRC 10782 / NRRL Y-8283 / UCD 57-17) (Kluyveromyces polysporus).